Here is a 1367-residue protein sequence, read N- to C-terminus: Paired amphipathic helix protein Sin3-like 2 (1367 aa).

The tract at residues 14 to 44 (QFKRPLGSSRGESYEQSPITGGGSIGEGGIN) is disordered. A compositionally biased stretch (gly residues) spans 33–42 (TGGGSIGEGG). PAH domains lie at 46–116 (QKLT…LPKG) and 130–200 (KTVE…LPDS). A disordered region spans residues 212 to 322 (SQAQRYDDRG…EAYSGPASHS (111 aa)). Basic and acidic residues-rich tracts occupy residues 230–286 (MFME…SRDL) and 299–311 (FSEK…RMEG). Positions 327 to 396 (LKSMYNQAFL…DEFNQFFERC (70 aa)) constitute a PAH 3 domain. 4 disordered regions span residues 417–446 (EENL…KERS), 786–883 (DVHA…LSKP), 912–946 (QSDT…DSED), and 958–1031 (ATAK…EGME). Composition is skewed to basic and acidic residues over residues 424-446 (VKGE…KERS) and 806-819 (SSGK…DLAN). 2 stretches are compositionally biased toward polar residues: residues 851–876 (ATSS…SSGS) and 912–923 (QSDTSKANSNYD). Residues 958 to 967 (ATAKTEHSVE) show a composition bias toward basic and acidic residues. 2 stretches are compositionally biased toward acidic residues: residues 968 to 989 (AEGE…EAGE) and 997 to 1016 (IGDE…EHDE). Ser-1023 is modified (phosphoserine).

Its subcellular location is the nucleus. Its function is as follows. Acts as a transcriptional repressor. Plays roles in regulating gene expression and genome stability. In Arabidopsis thaliana (Mouse-ear cress), this protein is Paired amphipathic helix protein Sin3-like 2 (SNL2).